The primary structure comprises 296 residues: Ribosomal protein L11 methyltransferase (296 aa).

Residues T146, G167, D189, and N231 each contribute to the S-adenosyl-L-methionine site.

It belongs to the methyltransferase superfamily. PrmA family.

The protein resides in the cytoplasm. It catalyses the reaction L-lysyl-[protein] + 3 S-adenosyl-L-methionine = N(6),N(6),N(6)-trimethyl-L-lysyl-[protein] + 3 S-adenosyl-L-homocysteine + 3 H(+). Methylates ribosomal protein L11. The polypeptide is Ribosomal protein L11 methyltransferase (Haemophilus influenzae (strain ATCC 51907 / DSM 11121 / KW20 / Rd)).